Reading from the N-terminus, the 1253-residue chain is Methionine synthase (1253 aa).

In terms of domain architecture, Hcy-binding spans 6–326 (QDEIEAILRK…DHIREIAEAV (321 aa)). Zn(2+)-binding residues include Cys248, Cys311, and Cys312. In terms of domain architecture, Pterin-binding spans 359–620 (FVNIGERCNV…IHKDLLQLCE (262 aa)). Residues 370–372 (GSR), Asp437, Asn458, Asp525, Asn567, Arg573, and Arg579 contribute to the (6S)-5,6,7,8-tetrahydrofolate site. The region spanning 650–747 (QTDEWRNGSI…FMEKEREEAR (98 aa)) is the B12-binding N-terminal domain. Residues Glu697, 770-774 (GDVHD), His773, Ser818, Thr822, and Ala874 each bind methylcob(III)alamin. The 136-residue stretch at 760–895 (QGTIVLATVK…DENLRDDYFE (136 aa)) folds into the B12-binding domain. The AdoMet activation domain occupies 911–1253 (SLKERKYVPL…LGPILGYDTD (343 aa)). S-adenosyl-L-methionine contacts are provided by residues Asp962, Arg1160, and 1215–1216 (YF). Phosphothreonine is present on Thr1252.

Belongs to the vitamin-B12 dependent methionine synthase family. As to quaternary structure, monomer. Dimer. Forms a multiprotein complex with MMACHC, MMADHC and MTRR. Methylcob(III)alamin is required as a cofactor. The cofactor is Zn(2+).

The protein resides in the cytoplasm. It catalyses the reaction (6S)-5-methyl-5,6,7,8-tetrahydrofolate + L-homocysteine = (6S)-5,6,7,8-tetrahydrofolate + L-methionine. It participates in amino-acid biosynthesis; L-methionine biosynthesis via de novo pathway; L-methionine from L-homocysteine (MetH route): step 1/1. In terms of biological role, catalyzes the transfer of a methyl group from methylcob(III)alamin (MeCbl) to homocysteine, yielding enzyme-bound cob(I)alamin and methionine in the cytosol. MeCbl is an active form of cobalamin (vitamin B12) used as a cofactor for methionine biosynthesis. Cob(I)alamin form is regenerated to MeCbl by a transfer of a methyl group from 5-methyltetrahydrofolate. The processing of cobalamin in the cytosol occurs in a multiprotein complex composed of at least MMACHC, MMADHC, MTRR (methionine synthase reductase) and MTR which may contribute to shuttle safely and efficiently cobalamin towards MTR in order to produce methionine. This Mus musculus (Mouse) protein is Methionine synthase.